The following is a 197-amino-acid chain: UPF0301 protein AnaeK_4073 (197 aa).

Belongs to the UPF0301 (AlgH) family.

This Anaeromyxobacter sp. (strain K) protein is UPF0301 protein AnaeK_4073.